Consider the following 344-residue polypeptide: Phosphoribosylformylglycinamidine cyclo-ligase (344 aa).

Belongs to the AIR synthase family.

The protein resides in the cytoplasm. The catalysed reaction is 2-formamido-N(1)-(5-O-phospho-beta-D-ribosyl)acetamidine + ATP = 5-amino-1-(5-phospho-beta-D-ribosyl)imidazole + ADP + phosphate + H(+). It participates in purine metabolism; IMP biosynthesis via de novo pathway; 5-amino-1-(5-phospho-D-ribosyl)imidazole from N(2)-formyl-N(1)-(5-phospho-D-ribosyl)glycinamide: step 2/2. The protein is Phosphoribosylformylglycinamidine cyclo-ligase of Haemophilus influenzae (strain 86-028NP).